Reading from the N-terminus, the 335-residue chain is Tetraacyldisaccharide 4'-kinase (335 aa).

59–66 (TAGGNGKT) serves as a coordination point for ATP.

Belongs to the LpxK family.

It catalyses the reaction a lipid A disaccharide + ATP = a lipid IVA + ADP + H(+). The protein operates within glycolipid biosynthesis; lipid IV(A) biosynthesis; lipid IV(A) from (3R)-3-hydroxytetradecanoyl-[acyl-carrier-protein] and UDP-N-acetyl-alpha-D-glucosamine: step 6/6. In terms of biological role, transfers the gamma-phosphate of ATP to the 4'-position of a tetraacyldisaccharide 1-phosphate intermediate (termed DS-1-P) to form tetraacyldisaccharide 1,4'-bis-phosphate (lipid IVA). The sequence is that of Tetraacyldisaccharide 4'-kinase from Vibrio parahaemolyticus serotype O3:K6 (strain RIMD 2210633).